Reading from the N-terminus, the 263-residue chain is Purine nucleoside phosphorylase SE_0862 (263 aa).

Positions 79, 124, and 141 each coordinate Zn(2+).

This sequence belongs to the purine nucleoside phosphorylase YfiH/LACC1 family. As to quaternary structure, homodimer. Requires Cu(2+) as cofactor. Zn(2+) serves as cofactor.

The catalysed reaction is adenosine + phosphate = alpha-D-ribose 1-phosphate + adenine. It catalyses the reaction S-methyl-5'-thioadenosine + phosphate = 5-(methylsulfanyl)-alpha-D-ribose 1-phosphate + adenine. The enzyme catalyses inosine + phosphate = alpha-D-ribose 1-phosphate + hypoxanthine. It carries out the reaction adenosine + H2O + H(+) = inosine + NH4(+). In terms of biological role, purine nucleoside enzyme that catalyzes the phosphorolysis of adenosine and inosine nucleosides, yielding D-ribose 1-phosphate and the respective free bases, adenine and hypoxanthine. Also catalyzes the phosphorolysis of S-methyl-5'-thioadenosine into adenine and S-methyl-5-thio-alpha-D-ribose 1-phosphate. Also has adenosine deaminase activity. The sequence is that of Purine nucleoside phosphorylase SE_0862 from Staphylococcus epidermidis (strain ATCC 12228 / FDA PCI 1200).